The sequence spans 238 residues: DNA damage-regulated autophagy modulator protein 1 (238 aa).

6 helical membrane passes run 9 to 29 (AFVPFLLVTWSSAAFIISYVV), 53 to 73 (SGIFGFMINFSAFLGAATMYT), 91 to 111 (VFNLVSLVLGLVGCFGMGIVA), 116 to 136 (LAVPVVHDGGALLAFVCGVVY), 161 to 181 (MVISAVSCAAVIPMIVCASLI), and 200 to 220 (VSAICEWTVAFGFIFYFLTFI).

Belongs to the DRAM/TMEM150 family.

The protein localises to the lysosome membrane. Lysosomal modulator of autophagy that plays a central role in p53/TP53-mediated apoptosis. Not involved in p73/TP73-mediated autophagy. The chain is DNA damage-regulated autophagy modulator protein 1 (DRAM1) from Homo sapiens (Human).